Reading from the N-terminus, the 362-residue chain is Biotin synthase (362 aa).

The Radical SAM core domain maps to 39-267 (NVVQVSTLLS…ETQVRLSAGR (229 aa)). Residues C54, C58, and C61 each coordinate [4Fe-4S] cluster. [2Fe-2S] cluster is bound by residues C98, C130, C190, and R262. Residues 317–362 (PFTKVSQPTTVEAKDSRYESLGEKPKWSRPSHTIEKNLELSGKGKN) are disordered. A compositionally biased stretch (basic and acidic residues) spans 328-354 (EAKDSRYESLGEKPKWSRPSHTIEKNL).

Belongs to the radical SAM superfamily. Biotin synthase family. As to quaternary structure, homodimer. [4Fe-4S] cluster is required as a cofactor. Requires [2Fe-2S] cluster as cofactor.

It catalyses the reaction (4R,5S)-dethiobiotin + (sulfur carrier)-SH + 2 reduced [2Fe-2S]-[ferredoxin] + 2 S-adenosyl-L-methionine = (sulfur carrier)-H + biotin + 2 5'-deoxyadenosine + 2 L-methionine + 2 oxidized [2Fe-2S]-[ferredoxin]. Its pathway is cofactor biosynthesis; biotin biosynthesis; biotin from 7,8-diaminononanoate: step 2/2. Its function is as follows. Catalyzes the conversion of dethiobiotin (DTB) to biotin by the insertion of a sulfur atom into dethiobiotin via a radical-based mechanism. The protein is Biotin synthase of Flavobacterium psychrophilum (strain ATCC 49511 / DSM 21280 / CIP 103535 / JIP02/86).